Reading from the N-terminus, the 391-residue chain is Probable chaperonin-like protein PrmG (391 aa).

Residues 153–191 (TTRWSVRSSPPPSNTSARTASSPPRRATHSGCRSRSSTA) form a disordered region. Polar residues predominate over residues 154 to 174 (TRWSVRSSPPPSNTSARTASS).

The protein belongs to the chaperonin (HSP60) family.

Its function is as follows. Probably plays an essential role in the productive folding of PrmA and PrmC, and thus in the formation of the active PrmABCD complex. The polypeptide is Probable chaperonin-like protein PrmG (Gordonia sp. (strain TY-5)).